The following is a 42-amino-acid chain: Cytochrome b559 subunit beta (42 aa).

Residues 17-33 (WLSIHALAVPTVFFLGA) form a helical membrane-spanning segment. His-21 is a heme binding site.

It belongs to the PsbE/PsbF family. Heterodimer of an alpha subunit and a beta subunit. PSII is composed of 1 copy each of membrane proteins PsbA, PsbB, PsbC, PsbD, PsbE, PsbF, PsbH, PsbI, PsbJ, PsbK, PsbL, PsbM, PsbT, PsbX, PsbY, PsbZ, Psb30/Ycf12, at least 3 peripheral proteins of the oxygen-evolving complex and a large number of cofactors. It forms dimeric complexes. Heme b serves as cofactor.

Its subcellular location is the plastid. The protein resides in the chloroplast thylakoid membrane. This b-type cytochrome is tightly associated with the reaction center of photosystem II (PSII). PSII is a light-driven water:plastoquinone oxidoreductase that uses light energy to abstract electrons from H(2)O, generating O(2) and a proton gradient subsequently used for ATP formation. It consists of a core antenna complex that captures photons, and an electron transfer chain that converts photonic excitation into a charge separation. In Tupiella akineta (Green alga), this protein is Cytochrome b559 subunit beta.